The chain runs to 230 residues: MALTPKQRKVRRDYLTRKKRTLQQQGASNAEIKAFMGGRWNFAGMSDKALERAYDEIKSKGRTQVFGNHVYTSDYVKKAKAWYGDKFSVEKLTQGFRSSQRSELNRFHSVKEVKEYRSERDREAKERYIQALEEMHYNTRDAGNKAQEKAFKSMISRIRRMSASNFGAFLTGGRSDKVSFDNVMVFVDTDGKETAFEFQDSLAREILDNVDKFSKQFVSDMRRRKKRGKK.

Positions 222–230 match the Nuclear localization signal motif; it reads RRRKKRGKK.

Its subcellular location is the host nucleus. It localises to the virion. Functionally, DNA terminal protein is linked to the 5'-ends of both strands of the genome through a phosphodiester bond between the beta-hydroxyl group of a threonine residue and the 5'-phosphate of the terminal deoxyadenylate. This protein is essential for DNA replication and is involved in the priming of DNA elongation. The chain is Terminal protein (4) from Streptococcus pneumoniae (Bacteriophage Cp-1).